A 243-amino-acid polypeptide reads, in one-letter code: Ribonuclease PH (243 aa).

Phosphate contacts are provided by residues R84 and 122 to 124 (GTR).

Belongs to the RNase PH family. As to quaternary structure, homohexameric ring arranged as a trimer of dimers.

It catalyses the reaction tRNA(n+1) + phosphate = tRNA(n) + a ribonucleoside 5'-diphosphate. In terms of biological role, phosphorolytic 3'-5' exoribonuclease that plays an important role in tRNA 3'-end maturation. Removes nucleotide residues following the 3'-CCA terminus of tRNAs; can also add nucleotides to the ends of RNA molecules by using nucleoside diphosphates as substrates, but this may not be physiologically important. Probably plays a role in initiation of 16S rRNA degradation (leading to ribosome degradation) during starvation. The chain is Ribonuclease PH from Bdellovibrio bacteriovorus (strain ATCC 15356 / DSM 50701 / NCIMB 9529 / HD100).